Reading from the N-terminus, the 271-residue chain is 2-dehydro-3-deoxyphosphooctonate aldolase (271 aa).

This sequence belongs to the KdsA family.

It localises to the cytoplasm. The enzyme catalyses D-arabinose 5-phosphate + phosphoenolpyruvate + H2O = 3-deoxy-alpha-D-manno-2-octulosonate-8-phosphate + phosphate. It participates in carbohydrate biosynthesis; 3-deoxy-D-manno-octulosonate biosynthesis; 3-deoxy-D-manno-octulosonate from D-ribulose 5-phosphate: step 2/3. It functions in the pathway bacterial outer membrane biogenesis; lipopolysaccharide biosynthesis. This chain is 2-dehydro-3-deoxyphosphooctonate aldolase, found in Campylobacter jejuni subsp. jejuni serotype O:2 (strain ATCC 700819 / NCTC 11168).